Consider the following 68-residue polypeptide: uncharacterized protein (68 aa).

This is an uncharacterized protein from Haemophilus influenzae (strain ATCC 51907 / DSM 11121 / KW20 / Rd).